We begin with the raw amino-acid sequence, 560 residues long: Oxygen-dependent choline dehydrogenase (560 aa).

6–35 is a binding site for FAD; sequence DYIIVGAGSAGCVLADRLSESGDHSVLLLE. Histidine 470 (proton acceptor) is an active-site residue.

Belongs to the GMC oxidoreductase family. It depends on FAD as a cofactor.

The enzyme catalyses choline + A = betaine aldehyde + AH2. It carries out the reaction betaine aldehyde + NAD(+) + H2O = glycine betaine + NADH + 2 H(+). The protein operates within amine and polyamine biosynthesis; betaine biosynthesis via choline pathway; betaine aldehyde from choline (cytochrome c reductase route): step 1/1. Functionally, involved in the biosynthesis of the osmoprotectant glycine betaine. Catalyzes the oxidation of choline to betaine aldehyde and betaine aldehyde to glycine betaine at the same rate. The polypeptide is Oxygen-dependent choline dehydrogenase (Vibrio vulnificus (strain YJ016)).